The chain runs to 474 residues: Ribulose bisphosphate carboxylase/oxygenase activase, chloroplastic (474 aa).

The N-terminal 58 residues, 1 to 58 (MAAAVSTVGAINRAPLSLNGSGSGAVSAPASTFLGKKVVTVSRFAQSNKKSNGSFKVL), are a transit peptide targeting the chloroplast. A Phosphothreonine; by CK2 modification is found at threonine 78. 165-172 (GGKGQGKS) is a binding site for ATP. Threonine 283 is modified (phosphothreonine).

It belongs to the RuBisCO activase family. In terms of processing, phosphorylated at Thr-78 by CK2.

Its subcellular location is the plastid. The protein resides in the chloroplast stroma. The protein localises to the chloroplast. It localises to the plastoglobule. In terms of biological role, activation of RuBisCO (ribulose-1,5-bisphosphate carboxylase/oxygenase; EC 4.1.1.39) involves the ATP-dependent carboxylation of the epsilon-amino group of lysine leading to a carbamate structure. This is Ribulose bisphosphate carboxylase/oxygenase activase, chloroplastic (RCA) from Arabidopsis thaliana (Mouse-ear cress).